The following is a 279-amino-acid chain: Ribosomal RNA small subunit methyltransferase J (279 aa).

Residues 138–139 (ER) and Asp194 each bind S-adenosyl-L-methionine.

This sequence belongs to the methyltransferase superfamily. RsmJ family.

It localises to the cytoplasm. The catalysed reaction is guanosine(1516) in 16S rRNA + S-adenosyl-L-methionine = N(2)-methylguanosine(1516) in 16S rRNA + S-adenosyl-L-homocysteine + H(+). Its function is as follows. Specifically methylates the guanosine in position 1516 of 16S rRNA. The chain is Ribosomal RNA small subunit methyltransferase J from Acinetobacter baumannii (strain AYE).